A 216-amino-acid chain; its full sequence is Superoxide dismutase [Cu-Zn], chloroplastic (216 aa).

The transit peptide at 1–62 (MACHSALAAV…ASPRSMVVVA (62 aa)) directs the protein to the chloroplast. Residues H108, H110, and H125 each coordinate Cu cation. An intrachain disulfide couples C119 to C208. Zn(2+)-binding residues include H125, H133, H142, and D145. A Cu cation-binding site is contributed by H182.

This sequence belongs to the Cu-Zn superoxide dismutase family. In terms of assembly, homotetramer. The cofactor is Cu cation. Zn(2+) is required as a cofactor.

It localises to the plastid. Its subcellular location is the chloroplast. The catalysed reaction is 2 superoxide + 2 H(+) = H2O2 + O2. In terms of biological role, destroys radicals which are normally produced within the cells and which are toxic to biological systems. The polypeptide is Superoxide dismutase [Cu-Zn], chloroplastic (SODCP) (Zantedeschia aethiopica (White calla lily)).